The chain runs to 334 residues: Chitin synthase export chaperone (334 aa).

A run of 7 helical transmembrane segments spans residues 49 to 69 (IIFEGATAVMHIVALVMTVIM), 88 to 108 (FFYLYMLLSAMSLVIDAGVVP), 123 to 143 (GFSSAVITCLLINGFVGFQLY), 159 to 179 (LAAFTISFLVSLATFKSWAGL), 185 to 205 (VGLFVVLYLLNAIQLFIYVAM), 220 to 240 (LGDIAFGIFFFVAGQVFLYAF), and 250 to 270 (HYLDGLFLATVCNLLGVMMVY).

It belongs to the CHS7 family. In terms of assembly, interacts with CHS3.

Its subcellular location is the endoplasmic reticulum membrane. Its function is as follows. Chaperone required for the export of the chitin synthase CHS3 from the endoplasmic reticulum. This chain is Chitin synthase export chaperone (CHS7), found in Gibberella zeae (strain ATCC MYA-4620 / CBS 123657 / FGSC 9075 / NRRL 31084 / PH-1) (Wheat head blight fungus).